The following is a 450-amino-acid chain: NADH-ubiquinone oxidoreductase chain 2 (450 aa).

13 helical membrane passes run 25–45, 58–78, 90–110, 113–133, 145–165, 186–206, 219–239, 248–268, 272–292, 295–315, 344–364, 385–405, and 414–436; these read GTIT…IVAM, LTPY…MLLM, SPFY…FPLV, LIAL…LTGL, LLYF…SYFV, AFDY…MAPL, TYIT…WIFA, VTIL…LFQV, TMLA…MMSY, AFYI…LGML, LAFS…TPGF, AIVV…KVLF, and NFIN…SFFM.

It belongs to the complex I subunit 2 family.

It localises to the mitochondrion inner membrane. It carries out the reaction a ubiquinone + NADH + 5 H(+)(in) = a ubiquinol + NAD(+) + 4 H(+)(out). In terms of biological role, core subunit of the mitochondrial membrane respiratory chain NADH dehydrogenase (Complex I) that is believed to belong to the minimal assembly required for catalysis. Complex I functions in the transfer of electrons from NADH to the respiratory chain. The immediate electron acceptor for the enzyme is believed to be ubiquinone. This chain is NADH-ubiquinone oxidoreductase chain 2 (ND2), found in Debaryomyces hansenii (strain ATCC 36239 / CBS 767 / BCRC 21394 / JCM 1990 / NBRC 0083 / IGC 2968) (Yeast).